The primary structure comprises 326 residues: MVLTEQKRKYMEKLSDENGIISALAFDQRGALKRLMAQYQEAEPTVEQMEDLKVLVAEELTPYASSMLLDPEYGLPATKALDKNAGLLLAYEKTGYDTSSTKRLPDCLDVWSAKRIKEQGSDAVKFLLYYDVDSSDELNQQKQAYIERVGSECVAEDIPFFLEILAYDEKIADAGSAEYAKVKPRKVIEAMKVFSDSRFNIDVLKVEVPVNVKYVEGFGDGEVIHTRGEAAAFFKQQDEATNLPYIYLSAGVAAKLFQETLIFAHESGANFNGVLCGRATWAGSVKEYIEQGEEAARQWLRTTGYQNIEELNQVLKQTATSWKERV.

The protein belongs to the aldolase LacD family.

It catalyses the reaction D-tagatofuranose 1,6-bisphosphate = D-glyceraldehyde 3-phosphate + dihydroxyacetone phosphate. It participates in carbohydrate metabolism; D-tagatose 6-phosphate degradation; D-glyceraldehyde 3-phosphate and glycerone phosphate from D-tagatose 6-phosphate: step 2/2. The chain is Tagatose 1,6-diphosphate aldolase 2 (lacD2) from Streptococcus agalactiae serotype III (strain NEM316).